The primary structure comprises 596 residues: Aspartate--tRNA(Asp/Asn) ligase (596 aa).

An L-aspartate-binding site is contributed by Glu173. Residues 197 to 200 (QLFK) are aspartate. An L-aspartate-binding site is contributed by Arg219. Residues 219–221 (RDE) and Gln228 each bind ATP. His450 provides a ligand contact to L-aspartate. Glu485 contacts ATP. Residue Arg492 coordinates L-aspartate. Residue 537–540 (GLDR) participates in ATP binding.

Belongs to the class-II aminoacyl-tRNA synthetase family. Type 1 subfamily. In terms of assembly, homodimer.

The protein resides in the cytoplasm. The enzyme catalyses tRNA(Asx) + L-aspartate + ATP = L-aspartyl-tRNA(Asx) + AMP + diphosphate. In terms of biological role, aspartyl-tRNA synthetase with relaxed tRNA specificity since it is able to aspartylate not only its cognate tRNA(Asp) but also tRNA(Asn). Reaction proceeds in two steps: L-aspartate is first activated by ATP to form Asp-AMP and then transferred to the acceptor end of tRNA(Asp/Asn). The sequence is that of Aspartate--tRNA(Asp/Asn) ligase from Hydrogenovibrio crunogenus (strain DSM 25203 / XCL-2) (Thiomicrospira crunogena).